The primary structure comprises 199 residues: Small ribosomal subunit protein eS6 (199 aa).

Basic and acidic residues predominate over residues 172–183 (KEQREKRSESLA). A disordered region spans residues 172–199 (KEQREKRSESLAKKRSRLSAASKPSIAA).

This sequence belongs to the eukaryotic ribosomal protein eS6 family. Ribosomal protein S6 is the major substrate of protein kinases in eukaryote ribosomes.

Functionally, component of the 40S small ribosomal subunit. Plays an important role in controlling cell growth and proliferation through the selective translation of particular classes of mRNA. The polypeptide is Small ribosomal subunit protein eS6 (RPS6) (Nicotiana tabacum (Common tobacco)).